Consider the following 257-residue polypeptide: Ribosomal RNA small subunit methyltransferase A (257 aa).

S-adenosyl-L-methionine contacts are provided by H12, L14, G39, E60, D83, and N101.

It belongs to the class I-like SAM-binding methyltransferase superfamily. rRNA adenine N(6)-methyltransferase family. RsmA subfamily.

It localises to the cytoplasm. The enzyme catalyses adenosine(1518)/adenosine(1519) in 16S rRNA + 4 S-adenosyl-L-methionine = N(6)-dimethyladenosine(1518)/N(6)-dimethyladenosine(1519) in 16S rRNA + 4 S-adenosyl-L-homocysteine + 4 H(+). Specifically dimethylates two adjacent adenosines (A1518 and A1519) in the loop of a conserved hairpin near the 3'-end of 16S rRNA in the 30S particle. May play a critical role in biogenesis of 30S subunits. This is Ribosomal RNA small subunit methyltransferase A from Nitrosomonas europaea (strain ATCC 19718 / CIP 103999 / KCTC 2705 / NBRC 14298).